Here is a 211-residue protein sequence, read N- to C-terminus: Thiamine-phosphate synthase (211 aa).

4-amino-2-methyl-5-(diphosphooxymethyl)pyrimidine contacts are provided by residues 37 to 41 and Asn-69; that span reads QLRIK. Residues Asp-70 and Asp-89 each coordinate Mg(2+). Ser-108 is a binding site for 4-amino-2-methyl-5-(diphosphooxymethyl)pyrimidine. 134–136 contacts 2-[(2R,5Z)-2-carboxy-4-methylthiazol-5(2H)-ylidene]ethyl phosphate; sequence TQT. Lys-137 serves as a coordination point for 4-amino-2-methyl-5-(diphosphooxymethyl)pyrimidine. 2-[(2R,5Z)-2-carboxy-4-methylthiazol-5(2H)-ylidene]ethyl phosphate contacts are provided by residues Gly-166 and 186–187; that span reads VS.

Belongs to the thiamine-phosphate synthase family. The cofactor is Mg(2+).

It catalyses the reaction 2-[(2R,5Z)-2-carboxy-4-methylthiazol-5(2H)-ylidene]ethyl phosphate + 4-amino-2-methyl-5-(diphosphooxymethyl)pyrimidine + 2 H(+) = thiamine phosphate + CO2 + diphosphate. The catalysed reaction is 2-(2-carboxy-4-methylthiazol-5-yl)ethyl phosphate + 4-amino-2-methyl-5-(diphosphooxymethyl)pyrimidine + 2 H(+) = thiamine phosphate + CO2 + diphosphate. It carries out the reaction 4-methyl-5-(2-phosphooxyethyl)-thiazole + 4-amino-2-methyl-5-(diphosphooxymethyl)pyrimidine + H(+) = thiamine phosphate + diphosphate. It participates in cofactor biosynthesis; thiamine diphosphate biosynthesis; thiamine phosphate from 4-amino-2-methyl-5-diphosphomethylpyrimidine and 4-methyl-5-(2-phosphoethyl)-thiazole: step 1/1. Its function is as follows. Condenses 4-methyl-5-(beta-hydroxyethyl)thiazole monophosphate (THZ-P) and 2-methyl-4-amino-5-hydroxymethyl pyrimidine pyrophosphate (HMP-PP) to form thiamine monophosphate (TMP). The polypeptide is Thiamine-phosphate synthase (Salmonella schwarzengrund (strain CVM19633)).